Here is a 305-residue protein sequence, read N- to C-terminus: Imidazoleglycerol-phosphate dehydratase (305 aa).

It belongs to the imidazoleglycerol-phosphate dehydratase family.

Its subcellular location is the cytoplasm. It carries out the reaction D-erythro-1-(imidazol-4-yl)glycerol 3-phosphate = 3-(imidazol-4-yl)-2-oxopropyl phosphate + H2O. It functions in the pathway amino-acid biosynthesis; L-histidine biosynthesis; L-histidine from 5-phospho-alpha-D-ribose 1-diphosphate: step 6/9. The chain is Imidazoleglycerol-phosphate dehydratase from Neisseria meningitidis serogroup C (strain 053442).